Here is a 145-residue protein sequence, read N- to C-terminus: Basic phospholipase A2 BFPA (145 aa).

A signal peptide spans 1–27 (MNPAHLLVLLAVCVSLLGAANIPPQSL). 7 disulfide bridges follow: C38-C97, C52-C144, C54-C70, C69-C125, C76-C118, C86-C111, and C104-C116. Residues Y53, G55, and G57 each contribute to the Ca(2+) site. H73 is a catalytic residue. D74 is a Ca(2+) binding site. D119 is a catalytic residue.

Belongs to the phospholipase A2 family. Group I subfamily. D49 sub-subfamily. Homodimer; disulfide-linked. It depends on Ca(2+) as a cofactor. In terms of tissue distribution, expressed by the venom gland.

The protein localises to the secreted. It carries out the reaction a 1,2-diacyl-sn-glycero-3-phosphocholine + H2O = a 1-acyl-sn-glycero-3-phosphocholine + a fatty acid + H(+). In terms of biological role, snake venom phospholipase A2 (PLA2) that inhibits blood coagulation and shows bactericidal activities against both Gram-negative and -positive bacteria (E.coli, MIC=0.4 uM and S.aureus, MIC=0.1 uM). PLA2 catalyzes the calcium-dependent hydrolysis of the 2-acyl groups in 3-sn-phosphoglycerides. This is Basic phospholipase A2 BFPA from Bungarus fasciatus (Banded krait).